The chain runs to 3344 residues: Genome polyprotein (3344 aa).

A Peptidase S30 domain is found at Ile408–Tyr547. Catalysis depends on for P1 proteinase activity residues His456, Asp465, and Ser499. Residues Lys598–Cys601 carry the Involved in interaction with stylet and aphid transmission motif. The short motif at Pro856–Lys858 is the Involved in virions binding and aphid transmission element. A Peptidase C6 domain is found at Met882–Gly1004. Catalysis depends on for helper component proteinase activity residues Cys890 and His963. The region spanning Glu1473–Glu1625 is the Helicase ATP-binding domain. Residue Gly1486–Ser1493 coordinates ATP. Residues Asp1575–His1578 carry the DECH box motif. The Helicase C-terminal domain occupies Asp1644–Gly1803. A Nuclear localization signal motif is present at residues Lys2134–Lys2141. At Tyr2156 the chain carries O-(5'-phospho-RNA)-tyrosine. The region spanning Gly2283–Glu2499 is the Peptidase C4 domain. Residues His2327, Asp2362, and Cys2431 each act as for nuclear inclusion protein A activity in the active site. The 125-residue stretch at Trp2761 to Leu2885 folds into the RdRp catalytic domain. Residues Lys3059–Ala3093 are compositionally biased toward basic and acidic residues. Residues Lys3059–Thr3116 are disordered.

This sequence belongs to the potyviridae genome polyprotein family. As to quaternary structure, interacts with host eIF4E protein (via cap-binding region); this interaction mediates the translation of the VPg-viral RNA conjugates. Part of a complex that comprises VPg, RNA, host EIF4E and EIF4G; this interaction mediates the translation of the VPg-viral RNA conjugates. VPg is uridylylated by the polymerase and is covalently attached to the 5'-end of the genomic RNA. This uridylylated form acts as a nucleotide-peptide primer for the polymerase. Post-translationally, potyviral RNA is expressed as two polyproteins which undergo post-translational proteolytic processing. Genome polyprotein is processed by NIa-pro, P1 and HC-pro proteinases resulting in the production of at least ten individual proteins. P3N-PIPO polyprotein is cleaved by P1 and HC-pro proteinases resulting in the production of three individual proteins. The P1 proteinase and the HC-pro cleave only their respective C-termini autocatalytically. 6K1 is essential for proper proteolytic separation of P3 from CI.

It is found in the host cytoplasmic vesicle. Its subcellular location is the host nucleus. It localises to the virion. It carries out the reaction RNA(n) + a ribonucleoside 5'-triphosphate = RNA(n+1) + diphosphate. It catalyses the reaction Hydrolyzes glutaminyl bonds, and activity is further restricted by preferences for the amino acids in P6 - P1' that vary with the species of potyvirus, e.g. Glu-Xaa-Xaa-Tyr-Xaa-Gln-|-(Ser or Gly) for the enzyme from tobacco etch virus. The natural substrate is the viral polyprotein, but other proteins and oligopeptides containing the appropriate consensus sequence are also cleaved.. The enzyme catalyses Hydrolyzes a Gly-|-Gly bond at its own C-terminus, commonly in the sequence -Tyr-Xaa-Val-Gly-|-Gly, in the processing of the potyviral polyprotein.. Functionally, required for aphid transmission and also has proteolytic activity. Only cleaves a Gly-Gly dipeptide at its own C-terminus. Interacts with virions and aphid stylets. Acts as a suppressor of RNA-mediated gene silencing, also known as post-transcriptional gene silencing (PTGS), a mechanism of plant viral defense that limits the accumulation of viral RNAs. May have RNA-binding activity. In terms of biological role, has helicase activity. It may be involved in replication. Its function is as follows. Indispensable for virus replication. Mediates the cap-independent, EIF4E-dependent translation of viral genomic RNAs. Binds to the cap-binding site of host EIF4E and thus interferes with the host EIF4E-dependent mRNA export and translation. VPg-RNA directly binds EIF4E and is a template for transcription. Also forms trimeric complexes with EIF4E-EIF4G, which are templates for translation. Functionally, has RNA-binding and proteolytic activities. In terms of biological role, an RNA-dependent RNA polymerase that plays an essential role in the virus replication. Its function is as follows. Involved in aphid transmission, cell-to-cell and systemis movement, encapsidation of the viral RNA and in the regulation of viral RNA amplification. This chain is Genome polyprotein, found in Carica papaya (Papaya).